We begin with the raw amino-acid sequence, 390 residues long: MMQSAAVPAEGAVKGLPEMLGVPMQQIPQCAGCNQHILDKFILKVLDRHWHSSCLKCADCQMQLADRCFSRAGSVYCKEDFFKRFGTKCTACQQGIPPTQVVRKAQDFVYHLHCFACIICNRQLATGDEFYLMEDGRLVCKEDYETAKQNDDSEAGAKRPRTTITAKQLETLKNAYKNSPKPARHVREQLSSETGLDMRVVQVWFQNRRAKEKRLKKDAGRHRWGQFYKSVKRSRGGSKQEKESSAEDCGVSDSELSFREDQILSELGHTNRIYGNVGDVTGGQLMNGSFSMDGTGQSYQDLRDGSPYGIPQSPSSISSLPSHAPLLNGLDYTVDSNLGIIAHAGQGVSQTLRAMAGGPTSDLSTGSSVGYPDFPTSPASWLDEMDHPPF.

2 LIM zinc-binding domains span residues 28 to 87 (PQCA…RFGT) and 88 to 150 (KCTA…AKQN). The homeobox DNA-binding region spans 157 to 216 (AKRPRTTITAKQLETLKNAYKNSPKPARHVREQLSSETGLDMRVVQVWFQNRRAKEKRLK). Positions 161–181 (RTTITAKQLETLKNAYKNSPK) are interaction with DNA. The interval 199-211 (RVVQVWFQNRRAK) is interaction with 5-mCpG DNA. Disordered stretches follow at residues 231–253 (VKRS…GVSD) and 355–390 (MAGG…HPPF).

In terms of tissue distribution, transient expression in ventrolateral regions of the developing neural tube and hindbrain.

The protein resides in the nucleus. Functionally, may play a critical role in the development of respiratory control mechanisms and in the normal growth and maturation of the lung. Binds preferentially to methylated DNA. The sequence is that of LIM/homeobox protein Lhx4 (Lhx4) from Mus musculus (Mouse).